Consider the following 64-residue polypeptide: Large ribosomal subunit protein bL35 (64 aa).

The protein belongs to the bacterial ribosomal protein bL35 family.

This is Large ribosomal subunit protein bL35 from Vibrio metschnikovii.